The chain runs to 704 residues: Elongation factor G 1 (704 aa).

The tr-type G domain occupies 8–285 (EKIRNIGISA…AVCAFLPNPK (278 aa)). Residues 17–24 (AHIDSGKT), 84–88 (DTPGH), and 138–141 (NKMD) each bind GTP.

The protein belongs to the TRAFAC class translation factor GTPase superfamily. Classic translation factor GTPase family. EF-G/EF-2 subfamily.

The protein localises to the cytoplasm. Catalyzes the GTP-dependent ribosomal translocation step during translation elongation. During this step, the ribosome changes from the pre-translocational (PRE) to the post-translocational (POST) state as the newly formed A-site-bound peptidyl-tRNA and P-site-bound deacylated tRNA move to the P and E sites, respectively. Catalyzes the coordinated movement of the two tRNA molecules, the mRNA and conformational changes in the ribosome. The sequence is that of Elongation factor G 1 from Myxococcus xanthus (strain DK1622).